We begin with the raw amino-acid sequence, 221 residues long: Ribosomal RNA large subunit methyltransferase E (221 aa).

Residues glycine 60, tryptophan 62, aspartate 89, aspartate 105, and aspartate 134 each coordinate S-adenosyl-L-methionine. Lysine 174 acts as the Proton acceptor in catalysis.

The protein belongs to the class I-like SAM-binding methyltransferase superfamily. RNA methyltransferase RlmE family.

The protein resides in the cytoplasm. It catalyses the reaction uridine(2552) in 23S rRNA + S-adenosyl-L-methionine = 2'-O-methyluridine(2552) in 23S rRNA + S-adenosyl-L-homocysteine + H(+). In terms of biological role, specifically methylates the uridine in position 2552 of 23S rRNA at the 2'-O position of the ribose in the fully assembled 50S ribosomal subunit. This is Ribosomal RNA large subunit methyltransferase E from Cupriavidus metallidurans (strain ATCC 43123 / DSM 2839 / NBRC 102507 / CH34) (Ralstonia metallidurans).